A 171-amino-acid polypeptide reads, in one-letter code: Transcription antitermination protein NusB (171 aa).

Belongs to the NusB family.

In terms of biological role, involved in transcription antitermination. Required for transcription of ribosomal RNA (rRNA) genes. Binds specifically to the boxA antiterminator sequence of the ribosomal RNA (rrn) operons. In Brucella melitensis biotype 1 (strain ATCC 23456 / CCUG 17765 / NCTC 10094 / 16M), this protein is Transcription antitermination protein NusB.